Reading from the N-terminus, the 347-residue chain is Anthranilate phosphoribosyltransferase (347 aa).

5-phospho-alpha-D-ribose 1-diphosphate-binding positions include Gly88, 91–92, Thr96, 98–101, 116–124, and Ser128; these read GD, NIST, and KHGNRSVSS. Gly88 lines the anthranilate pocket. Residue Ser100 participates in Mg(2+) binding. Asn119 is a binding site for anthranilate. An anthranilate-binding site is contributed by Arg174. Asp232 and Glu233 together coordinate Mg(2+).

The protein belongs to the anthranilate phosphoribosyltransferase family. In terms of assembly, homodimer. Mg(2+) serves as cofactor.

The catalysed reaction is N-(5-phospho-beta-D-ribosyl)anthranilate + diphosphate = 5-phospho-alpha-D-ribose 1-diphosphate + anthranilate. Its pathway is amino-acid biosynthesis; L-tryptophan biosynthesis; L-tryptophan from chorismate: step 2/5. Functionally, catalyzes the transfer of the phosphoribosyl group of 5-phosphorylribose-1-pyrophosphate (PRPP) to anthranilate to yield N-(5'-phosphoribosyl)-anthranilate (PRA). The protein is Anthranilate phosphoribosyltransferase of Shewanella sp. (strain MR-7).